We begin with the raw amino-acid sequence, 1346 residues long: Pikromycin polyketide synthase component PikAIV (1346 aa).

The stretch at 3–32 (SSNEQLVDALRASLKENEELRKESRRRADR) forms a coiled coil. The Ketosynthase family 3 (KS3) domain maps to 34 to 461 (QEPMAIVGMS…GTNAHVVLEE (428 aa)). The interval 37 to 1332 (MAIVGMSCRF…HAPAVAEAVL (1296 aa)) is module 6. Catalysis depends on for beta-ketoacyl synthase activity residues C207, H342, and H382. An acyltransferase region spans residues 562 to 844 (FVFPGQGTQW…VLTMTLPDKV (283 aa)). S652 serves as the catalytic Acyl-ester intermediate; for acyltransferase activity. Residues 945–1020 (SAVLAMVMRQ…ALAERISDEL (76 aa)) enclose the Carrier domain. Residue S980 is modified to O-(pantetheine 4'-phosphoryl)serine. Residues 1028–1050 (AEPSDHEQAEEEKAAAPAGARSG) are disordered. Residues 1030–1041 (PSDHEQAEEEKA) are compositionally biased toward basic and acidic residues. T1125 lines the substrate pocket. The segment at 1127-1332 (ANGGPHEFLR…HAPAVAEAVL (206 aa)) is thioesterase. S1196 serves as the catalytic Nucleophile; for thioesterase activity. The substrate site is built by G1197 and D1224. Catalysis depends on H1316, which acts as the Proton acceptor; for thioesterase activity.

In terms of assembly, homodimer. Pikromycin PKS consists of a combination of multimodular (PikAI and PikAII) and monomodular (PikAIII and PikAIV) polypeptides each coding for a functional synthase subunit which participates in 1 (monomodular) or 2 (multimodular) of the six FAS-like elongation steps required for formation of the polyketide. Module 1, 2, 3, 4, 5, and 6 participating in biosynthesis steps 1, 2, 3, 4, 5, and 6, respectively. It depends on pantetheine 4'-phosphate as a cofactor.

The enzyme catalyses 5 (S)-methylmalonyl-CoA + malonyl-CoA + 5 NADPH + 11 H(+) = 10-deoxymethynolide + 6 CO2 + 5 NADP(+) + 6 CoA + 2 H2O. The catalysed reaction is 6 (S)-methylmalonyl-CoA + malonyl-CoA + 5 NADPH + 12 H(+) = narbonolide + 7 CO2 + 5 NADP(+) + 7 CoA + 2 H2O. The protein operates within antibiotic biosynthesis. With respect to regulation, irreversibly inhibited by (2S,3R,4S)-2,4-dihydroxy-3-methylhexyl-phosphonic acid and (3R,4S)-4-hydroxy-3-methyl-2-oxohexyl-phosphonic acid. Involved in the biosynthesis of 12- and 14-membered ring macrolactone antibiotics such as methymycin and neomethymycin, and pikromycin and narbomycin, respectively. Component of the pikromycin PKS which catalyzes the biosynthesis of both precursors 10-deoxymethynolide (12-membered ring macrolactone) and narbonolide (14-membered ring macrolactone). Chain elongation through PikAI, PikAII and PikAIII followed by thioesterase catalyzed termination results in the production of 10-deoxymethynolide, while continued elongation through PikAIV, followed by thioesterase (TE) catalyzed cyclization results in the biosynthesis of the narbonolide. The thioesterase can use a series of diketide-N-acetylcysteamine (SNAC) thioesters, but has a strong preference for the 2-methyl-3-ketopentanoyl-SNAC over the stereoisomers of 2-methyl-3-hydroxyacyl-SNAC. The polypeptide is Pikromycin polyketide synthase component PikAIV (Streptomyces venezuelae).